A 918-amino-acid polypeptide reads, in one-letter code: MKNKILNTVLISILLLVVVFFVSTNFIINVQWFKEVGYLNVFFTKLIAICKLFVPIFILYFCVIAIYLFTLRKSIRSLVGDTKFKSVKKYFLLSNLVISILGAGATATTQWYKILQFTNAVPFGEVDPIFNKDISFYVFKLPLVQSLFSTAISLIIILVLITVIIYLALGFKDKIYQNKDNVININSKTYGIRKFAGKQLAVLASVLSLLIGCSYLLKSYNLVYSTRGVSYGAGYTDVKITMIFYKVIAIACVISSIVVFISILKLKFRPIIISIASIAVLIVLEPVVAIFTQQFVVKPNEMELEKPYISYSIDATKKAFNIDEIEVKEMEPNENITSEKLEDNKDIIENLKVNSTGPLLSFYQQVQLIKNYYEFNDADTDRYNINGKYTQVFVSPREINREAMTTWQNKHLRYTHGYGLAMSRVNSVTEFGQPDFVMKDIPTVNTTDINLENPRIYFGESDNDYVIVNTEGGEFDYPTGDTENTFNYNGTGGLKMTPFNRVLFSIYERNPKILMSSSITSESRIILNRNIVKRVQEIAPFLTYDSDPYIVVHDGRLVWMMNAYTSTDKYPFSEPHEGVNYIRNSVKVVVDAFNGNVDFYVTDENDPIINCYLKIYKGLFKPLSEMPEDLKEHFRYPQDLFELQSKVLTKYHVDDPIKLFTEEDLWDRSLDVVKHGGENLSQGDEGKEESILNKAKENKNNEAENEGLYLMTKLPDEENVEMMLLDYFNMRGKQSMVALLGARMDGDNYGELVMYKFPPQRTIYSPILFKNRIQQDPNISKEISLWAGKGSEVIYGDIIIVPIEDSLLYLNTIYLKANSENSMPEMKRVILSNGDKIVIEENIEKALLKLFNYNSFEENKNSNKDETSNTEITSDNSGVKEAADLFNKAIEAQKNGDWATYGEFINKLGDVLNKMSHD.

The next 7 membrane-spanning stretches (helical) occupy residues 8–28, 46–66, 91–111, 151–171, 200–220, 243–263, and 271–291; these read TVLI…NFII, LIAI…VIAI, FLLS…TTQW, AISL…ALGF, LAVL…LKSY, IFYK…FISI, and IIIS…VAIF.

This sequence belongs to the UPF0182 family.

Its subcellular location is the cell membrane. This is UPF0182 protein CPR_0011 from Clostridium perfringens (strain SM101 / Type A).